A 65-amino-acid polypeptide reads, in one-letter code: Hirudin-3A (65 aa).

The tract at residues 1 to 3 is interaction with thrombin active site; that stretch reads VVY. 3 disulfide bridges follow: C6–C14, C16–C28, and C22–C39. Positions 39 to 65 are disordered; that stretch reads CVTGEGTPKPQSHNDGDFEEIPEEYLQ. Residue T45 is glycosylated (O-linked (GalNAc...) threonine). The tract at residues 55 to 65 is interaction with fibrinogen-binding exosite of thrombin; it reads DFEEIPEEYLQ. A compositionally biased stretch (acidic residues) spans 55 to 65; that stretch reads DFEEIPEEYLQ. Position 63 is a sulfotyrosine (Y63).

The protein belongs to the protease inhibitor I14 (hirudin) family.

The protein resides in the secreted. Functionally, hirudin is a potent thrombin-specific protease inhibitor. It forms a stable non-covalent complex with alpha-thrombin, thereby abolishing its ability to cleave fibrinogen. In Hirudo medicinalis (Medicinal leech), this protein is Hirudin-3A.